Here is a 131-residue protein sequence, read N- to C-terminus: UPF0102 protein YraN (131 aa).

Over residues 1 to 19 (MATVPTRSGSPRQLTTKQT) the composition is skewed to polar residues. Positions 1-21 (MATVPTRSGSPRQLTTKQTGD) are disordered.

The protein belongs to the UPF0102 family.

The polypeptide is UPF0102 protein YraN (Escherichia coli O127:H6 (strain E2348/69 / EPEC)).